We begin with the raw amino-acid sequence, 311 residues long: Protein translocase subunit SecF (311 aa).

Transmembrane regions (helical) follow at residues 19–39 (AIYA…TQGL), 142–162 (MLAM…RFEL), 166–186 (LGAV…FSVL), 192–212 (LVVV…TIVV), 245–265 (ITSL…GAVI), and 272–292 (LLFG…PLVL).

This sequence belongs to the SecD/SecF family. SecF subfamily. As to quaternary structure, forms a complex with SecD. Part of the essential Sec protein translocation apparatus which comprises SecA, SecYEG and auxiliary proteins SecDF-YajC and YidC.

The protein resides in the cell inner membrane. Its function is as follows. Part of the Sec protein translocase complex. Interacts with the SecYEG preprotein conducting channel. SecDF uses the proton motive force (PMF) to complete protein translocation after the ATP-dependent function of SecA. This chain is Protein translocase subunit SecF, found in Magnetococcus marinus (strain ATCC BAA-1437 / JCM 17883 / MC-1).